Consider the following 306-residue polypeptide: Acetyl-coenzyme A carboxylase carboxyl transferase subunit beta (306 aa).

The 270-residue stretch at 25 to 294 (LWIKDPTSGE…VFNPSDPSPT (270 aa)) folds into the CoA carboxyltransferase N-terminal domain. Residues 286–306 (FNPSDPSPTDSQTSLSTTKAA) form a disordered region. Positions 288–306 (PSDPSPTDSQTSLSTTKAA) are enriched in low complexity.

The protein belongs to the AccD/PCCB family. In terms of assembly, acetyl-CoA carboxylase is a heterohexamer composed of biotin carboxyl carrier protein (AccB), biotin carboxylase (AccC) and two subunits each of ACCase subunit alpha (AccA) and ACCase subunit beta (AccD).

The protein localises to the cytoplasm. The catalysed reaction is N(6)-carboxybiotinyl-L-lysyl-[protein] + acetyl-CoA = N(6)-biotinyl-L-lysyl-[protein] + malonyl-CoA. Its pathway is lipid metabolism; malonyl-CoA biosynthesis; malonyl-CoA from acetyl-CoA: step 1/1. In terms of biological role, component of the acetyl coenzyme A carboxylase (ACC) complex. Biotin carboxylase (BC) catalyzes the carboxylation of biotin on its carrier protein (BCCP) and then the CO(2) group is transferred by the transcarboxylase to acetyl-CoA to form malonyl-CoA. This Bartonella grahamii (strain as4aup) protein is Acetyl-coenzyme A carboxylase carboxyl transferase subunit beta.